A 209-amino-acid chain; its full sequence is 2-phospho-L-lactate guanylyltransferase (209 aa).

Belongs to the CofC family. In terms of assembly, homodimer.

It carries out the reaction (2S)-2-phospholactate + GTP + H(+) = (2S)-lactyl-2-diphospho-5'-guanosine + diphosphate. Its pathway is cofactor biosynthesis; coenzyme F420 biosynthesis. Its function is as follows. Guanylyltransferase that catalyzes the activation of (2S)-2-phospholactate (2-PL) as (2S)-lactyl-2-diphospho-5'-guanosine, via the condensation of 2-PL with GTP. It is involved in the biosynthesis of coenzyme F420, a hydride carrier cofactor. The polypeptide is 2-phospho-L-lactate guanylyltransferase (Halobacterium salinarum (strain ATCC 29341 / DSM 671 / R1)).